The chain runs to 208 residues: MELKVLNTSGTETGEVVTLNEEIFGVEVSEHAMYLDVKSILANKRQGTHKAKTRAQVRGGGRKPYRQKGTGNARQGSTRSPLMIGGGTIFGPQPRSYDQKVNKKVKLLARRSALSAKAKAGKILVIEDFRLDAIKTKPVAEILKNLGLEQKKILMLTPEYDMIIARSGRNIPVLNIMTADKVSTYDILNSSAILFQKTALTKIEDTLG.

Residues 45–85 form a disordered region; that stretch reads RQGTHKAKTRAQVRGGGRKPYRQKGTGNARQGSTRSPLMIG. The span at 46–66 shows a compositional bias: basic residues; the sequence is QGTHKAKTRAQVRGGGRKPYR. Positions 69-80 are enriched in polar residues; it reads GTGNARQGSTRS.

This sequence belongs to the universal ribosomal protein uL4 family. As to quaternary structure, part of the 50S ribosomal subunit.

Functionally, one of the primary rRNA binding proteins, this protein initially binds near the 5'-end of the 23S rRNA. It is important during the early stages of 50S assembly. It makes multiple contacts with different domains of the 23S rRNA in the assembled 50S subunit and ribosome. Forms part of the polypeptide exit tunnel. The protein is Large ribosomal subunit protein uL4 of Chlorobium phaeobacteroides (strain DSM 266 / SMG 266 / 2430).